Here is a 72-residue protein sequence, read N- to C-terminus: Large ribosomal subunit protein uL29 (72 aa).

This sequence belongs to the universal ribosomal protein uL29 family. Part of the 50S ribosomal subunit.

The sequence is that of Large ribosomal subunit protein uL29 from Pyrococcus furiosus (strain ATCC 43587 / DSM 3638 / JCM 8422 / Vc1).